Reading from the N-terminus, the 354-residue chain is Guanine nucleotide-binding protein G(t) subunit alpha-3 (354 aa).

A disordered region spans residues Met1–Asp26. Gly2 is lipidated: N-myristoyl glycine. Residues Glu8 to Asp26 show a composition bias toward basic and acidic residues. Positions Arg32 to Phe354 constitute a G-alpha domain. Positions Lys35 to Thr48 are G1 motif. GTP contacts are provided by residues Gly40–Ser47, Leu175–Thr181, Asp200–Gln204, Asn269–Asp272, and Ala326. Mg(2+)-binding residues include Ser47 and Thr181. A G2 motif region spans residues Asp173 to Thr181. Residues Phe196 to Arg205 form a G3 motif region. The interval Val265 to Asp272 is G4 motif. A G5 motif region spans residues Thr324 to Thr329.

It belongs to the G-alpha family. G(i/o/t/z) subfamily. As to quaternary structure, g proteins are composed of 3 units; alpha, beta and gamma, respectively GNAT3, GNB1 and GNG13 for Gustducin heterotrimer for bitter taste transduction. The alpha chain contains the guanine nucleotide binding site. Component of the TAS2R14-GNAT3 complex, consisting of TAS2R14, GNAT3, GNB1 and GNG2; within the complex interacts with TAS2R14; this complex plays a role in the perception of bitterness. Gustducin heterotrimer may also be composed of GNAT3, GNB3 and GNG13. As to expression, expressed in epithelial cells of taste buds of the circumvallate, foliate and fungiform. Detected in various region of the respiratory track. Expressed also in spermatozoa.

The protein localises to the cytoplasm. In terms of biological role, guanine nucleotide-binding protein (G protein) alpha subunit playing a prominent role in bitter and sweet taste transduction as well as in umami (monosodium glutamate, monopotassium glutamate, and inosine monophosphate) taste transduction. The polypeptide is Guanine nucleotide-binding protein G(t) subunit alpha-3 (GNAT3) (Bos taurus (Bovine)).